Consider the following 477-residue polypeptide: Probable periplasmic serine endoprotease DegP-like (477 aa).

The signal sequence occupies residues 1 to 27 (MSIPRLKSYLMMFAAVLMLGQVLTAQA). Residues H117, D147, and S220 each act as charge relay system in the active site. Substrate contacts are provided by residues 218-220 (GNS) and 275-279 (LGVVI). PDZ domains follow at residues 264–355 (LKKD…IRNG) and 361–466 (DISV…LRQG).

The protein belongs to the peptidase S1C family.

It is found in the periplasm. It carries out the reaction Acts on substrates that are at least partially unfolded. The cleavage site P1 residue is normally between a pair of hydrophobic residues, such as Val-|-Val.. Might be efficient in the degradation of transiently denatured and unfolded proteins which accumulate in the periplasm following stress conditions. This chain is Probable periplasmic serine endoprotease DegP-like, found in Pseudomonas putida (strain ATCC 700007 / DSM 6899 / JCM 31910 / BCRC 17059 / LMG 24140 / F1).